The primary structure comprises 392 residues: uncharacterized protein (392 aa).

The transit peptide at 1 to 34 (MCISSSSLLCGINSLKYASNRVGILIPPFQTASS) directs the protein to the mitochondrion. 8 helical membrane passes run 115-135 (VAIM…WHWD), 150-172 (FRFM…WWTL), 185-205 (LLVN…KFGV), 208-225 (ALSV…VALQ), 277-297 (ATFV…AVYA), 299-319 (AAIF…VYPV), 321-341 (AGIF…LNYE), and 350-370 (AHVS…PAMW). Ser292 (nucleophile) is an active-site residue. His351 is a catalytic residue.

The protein belongs to the peptidase S54 family.

Its subcellular location is the mitochondrion inner membrane. This is an uncharacterized protein from Schizosaccharomyces pombe (strain 972 / ATCC 24843) (Fission yeast).